Reading from the N-terminus, the 54-residue chain is Hydrophobic protein RCI2A (54 aa).

The next 2 membrane-spanning stretches (helical) occupy residues 2–22 and 32–52; these read STAT…GVFL and ICLV…IYVL.

Belongs to the UPF0057 (PMP3) family.

It is found in the membrane. The chain is Hydrophobic protein RCI2A (RCI2A) from Arabidopsis thaliana (Mouse-ear cress).